The sequence spans 1181 residues: C5a peptidase (1181 aa).

The N-terminal stretch at 1 to 31 (MRKKQKLPFDKLAIALMSTSILLNAQSDIKA) is a signal peptide. Residues 33–52 (TVTEDTPATEQAVETPQPTA) show a composition bias toward polar residues. The interval 33–117 (TVTEDTPATE…PSQVKTLQEK (85 aa)) is disordered. Acidic residues predominate over residues 70-81 (DDAEETIADDAN). A Peptidase S8 domain is found at 99 to 581 (KATIRDLNDP…AGAVDAKKAS (483 aa)). Catalysis depends on charge relay system residues aspartate 130, histidine 193, and serine 512. Composition is skewed to basic and acidic residues over residues 1029-1054 (EGHS…KPEQ), 1061-1071 (PDKKPETKPEQ), 1078-1088 (PDKKPETKPEQ), and 1095-1107 (PDKK…EKDS). A disordered region spans residues 1029 to 1150 (EGHSNKPEQD…KDQLPTTNDK (122 aa)). 5 tandem repeats follow at residues 1034–1050 (KPEQ…KPET), 1051–1067 (KPEQ…KPET), 1068–1084 (KPEQ…KPET), 1085–1101 (KPEQ…KPET), and 1102–1118 (KPEK…TPQK). The interval 1034 to 1118 (KPEQDGSDQA…GQTPGKTPQK (85 aa)) is 5 X 17 AA tandem repeats. Polar residues-rich tracts occupy residues 1109-1123 (GQTP…QPSR) and 1137-1147 (KASTKDQLPTT). The short motif at 1144–1148 (LPTTN) is the LPXTG sorting signal element. Threonine 1147 is modified (pentaglycyl murein peptidoglycan amidated threonine). Positions 1148 to 1181 (NDKDTNRLHLLKLVMTTFFLGLVAHIFKTKRTED) are cleaved as a propeptide — removed by sortase.

Belongs to the peptidase S8 family. Cleaved by SpeB protease; leading to its degradation. Degradation by SpeB is probably strictly regulated to preserve integrity of C5a peptidase.

It localises to the secreted. The protein localises to the cell wall. It carries out the reaction The primary cleavage site is at 67-His-|-Lys-68 in human C5a with a minor secondary cleavage site at 58-Ala-|-Ser-59.. Functionally, this virulence factor of S.pyogenes specifically cleaves the human serum chemotaxin C5a at '68-Lys-|-Asp-69' bond near its C-terminus, destroying its ability to serve as a chemoattractant. The protein is C5a peptidase (scpA) of Streptococcus pyogenes serotype M1.